Reading from the N-terminus, the 245-residue chain is DNA repair protein RecO (245 aa).

It belongs to the RecO family.

Involved in DNA repair and RecF pathway recombination. The sequence is that of DNA repair protein RecO from Pectobacterium atrosepticum (strain SCRI 1043 / ATCC BAA-672) (Erwinia carotovora subsp. atroseptica).